Here is a 336-residue protein sequence, read N- to C-terminus: Meiotically up-regulated gene 33 protein (336 aa).

The tract at residues 232–336 (ISEDDGLKRG…KPSRFSWGRS (105 aa)) is disordered. Positions 250–262 (TFSNDSRSLSSYA) are enriched in polar residues.

Its subcellular location is the cytoplasm. Its function is as follows. Has a role in meiosis. The sequence is that of Meiotically up-regulated gene 33 protein (mug33) from Schizosaccharomyces pombe (strain 972 / ATCC 24843) (Fission yeast).